Here is a 31-residue protein sequence, read N- to C-terminus: Cytochrome b6-f complex subunit 6 (31 aa).

The helical transmembrane segment at 4–24 (ITSYFGFLLAALTITSALFIG) threads the bilayer.

The protein belongs to the PetL family. In terms of assembly, the 4 large subunits of the cytochrome b6-f complex are cytochrome b6, subunit IV (17 kDa polypeptide, PetD), cytochrome f and the Rieske protein, while the 4 small subunits are PetG, PetL, PetM and PetN. The complex functions as a dimer.

It localises to the plastid. It is found in the chloroplast thylakoid membrane. Its function is as follows. Component of the cytochrome b6-f complex, which mediates electron transfer between photosystem II (PSII) and photosystem I (PSI), cyclic electron flow around PSI, and state transitions. PetL is important for photoautotrophic growth as well as for electron transfer efficiency and stability of the cytochrome b6-f complex. The chain is Cytochrome b6-f complex subunit 6 from Citrus sinensis (Sweet orange).